The sequence spans 547 residues: MFPGAWLCWVSLLLLARLTQPCPVGCDCFGREVFCSDEQLADIPPDIPPHITDIVFVETAFTTVRTRAFSGSPNLTKVVFLNTQVRHLEPDAFGGLPRLQDLEITGSPVSNLSAHIFSNLSSLEKLTLDFDRLAGLPEDLFCHMDILESLQLQGNQLRTLPGRLFQSLRDLRTLNLAQNLLTQLPKGAFQSLTGLQMLKLSNNMLARLPEGALGSLSSLQELFLDGNAITELSPHLFSQLFSLEMLWLQHNAICHLPVSLFSSLHNLTFLSLKDNALRTLPEGLFAHNQGLLHLSLSYNQLETIPEGAFTNLSRLVSLTLSHNAITDLPEHVFRNLEQLVKLSLDSNNLTALHPALFHNLSRLQLLNLSRNQLTTLPGGIFDTNYDLFNLALLGNPWQCDCHLSYLTSWLRLYNNQISNTHTFCAGPAYLKGQLVPNLKQEQLICPVNPGHLSFRALGLDEGEPAGSWDLTVEGRAAHSQCAYSNPEGTVLLACEESRCRWLNIQLSSRDGSDSAAMVYNSSQEWGLRSSCGLLRVTVSIEAPAAGP.

A signal peptide spans 1–21 (MFPGAWLCWVSLLLLARLTQP). Positions 22–49 (CPVGCDCFGREVFCSDEQLADIPPDIPP) constitute an LRRNT domain. 3 N-linked (GlcNAc...) asparagine glycosylation sites follow: Asn74, Asn111, and Asn119. LRR repeat units lie at residues 98-119 (RLQDLEITGSPVSNLSAHIFSN), 122-143 (SLEKLTLDFDRLAGLPEDLFCH), 146-167 (ILESLQLQGNQLRTLPGRLFQS), 170-191 (DLRTLNLAQNLLTQLPKGAFQS), 194-215 (GLQMLKLSNNMLARLPEGALGS), 218-239 (SLQELFLDGNAITELSPHLFSQ), 242-263 (SLEMLWLQHNAICHLPVSLFSS), 266-287 (NLTFLSLKDNALRTLPEGLFAH), 290-311 (GLLHLSLSYNQLETIPEGAFTN), 314-335 (RLVSLTLSHNAITDLPEHVFRN), 338-359 (QLVKLSLDSNNLTALHPALFHN), and 362-383 (RLQLLNLSRNQLTTLPGGIFDT). N-linked (GlcNAc...) asparagine glycans are attached at residues Asn266 and Asn311. Asn348, Asn359, and Asn367 each carry an N-linked (GlcNAc...) asparagine glycan. Residues 395–447 (NPWQCDCHLSYLTSWLRLYNNQISNTHTFCAGPAYLKGQLVPNLKQEQLICPV) form the LRRCT domain. N-linked (GlcNAc...) asparagine glycosylation occurs at Asn520.

As to quaternary structure, tetramer of two catalytic chains and two glycosylated inactive chains.

The protein localises to the secreted. The 83 kDa subunit binds and stabilizes the catalytic subunit at 37 degrees Celsius and keeps it in circulation. Under some circumstances it may be an allosteric modifier of the catalytic subunit. This chain is Carboxypeptidase N subunit 2 (Cpn2), found in Mus musculus (Mouse).